The sequence spans 305 residues: Tyrosine recombinase XerC (305 aa).

The region spanning 2–88 is the Core-binding (CB) domain; sequence NQLELYIDTF…TLRSFYRFLE (87 aa). The Tyr recombinase domain occupies 109 to 294; that stretch reads PVPGFLYQEE…TKDHLREAYM (186 aa). Active-site residues include arginine 149, lysine 173, histidine 246, arginine 249, and histidine 272. Tyrosine 281 (O-(3'-phospho-DNA)-tyrosine intermediate) is an active-site residue.

It belongs to the 'phage' integrase family. XerC subfamily. Forms a cyclic heterotetrameric complex composed of two molecules of XerC and two molecules of XerD.

The protein localises to the cytoplasm. Site-specific tyrosine recombinase, which acts by catalyzing the cutting and rejoining of the recombining DNA molecules. The XerC-XerD complex is essential to convert dimers of the bacterial chromosome into monomers to permit their segregation at cell division. It also contributes to the segregational stability of plasmids. The protein is Tyrosine recombinase XerC of Oceanobacillus iheyensis (strain DSM 14371 / CIP 107618 / JCM 11309 / KCTC 3954 / HTE831).